A 264-amino-acid polypeptide reads, in one-letter code: NAD kinase 1 (264 aa).

Catalysis depends on Asp-45, which acts as the Proton acceptor. NAD(+) contacts are provided by residues 45–46 (DG), Gly-46, 122–123 (NE), Arg-148, Asp-150, Ser-158, 161–166 (TAYNKS), and His-223.

The protein belongs to the NAD kinase family. In terms of assembly, homotetramer. It depends on a divalent metal cation as a cofactor.

The protein resides in the cytoplasm. It carries out the reaction NAD(+) + ATP = ADP + NADP(+) + H(+). With respect to regulation, competitively inhibited by 5'-thioacetyladenosine (TAA) and di-(5'-thioadenosine) (DTA). In terms of biological role, involved in the regulation of the intracellular balance of NAD and NADP, and is a key enzyme in the biosynthesis of NADP. Catalyzes specifically the phosphorylation on 2'-hydroxyl of the adenosine moiety of NAD to yield NADP. The sequence is that of NAD kinase 1 from Listeria monocytogenes serovar 1/2a (strain ATCC BAA-679 / EGD-e).